A 100-amino-acid chain; its full sequence is Small ribosomal subunit protein uS14 (100 aa).

The protein belongs to the universal ribosomal protein uS14 family. In terms of assembly, part of the 30S ribosomal subunit. Contacts proteins S3 and S10.

Binds 16S rRNA, required for the assembly of 30S particles and may also be responsible for determining the conformation of the 16S rRNA at the A site. The protein is Small ribosomal subunit protein uS14 of Prochlorococcus marinus (strain MIT 9215).